A 470-amino-acid polypeptide reads, in one-letter code: Glutamate--tRNA ligase (470 aa).

The 'HIGH' region signature appears at 9 to 19; the sequence is PSPTGFLHVGG. A 'KMSKS' region motif is present at residues 236-240; it reads RLSKR. Lys239 is an ATP binding site.

This sequence belongs to the class-I aminoacyl-tRNA synthetase family. Glutamate--tRNA ligase type 1 subfamily. As to quaternary structure, monomer.

It is found in the cytoplasm. It catalyses the reaction tRNA(Glu) + L-glutamate + ATP = L-glutamyl-tRNA(Glu) + AMP + diphosphate. Catalyzes the attachment of glutamate to tRNA(Glu) in a two-step reaction: glutamate is first activated by ATP to form Glu-AMP and then transferred to the acceptor end of tRNA(Glu). The chain is Glutamate--tRNA ligase from Legionella pneumophila (strain Lens).